Here is an 862-residue protein sequence, read N- to C-terminus: Squamosa promoter-binding-like protein 1 (862 aa).

Residues 55–98 (KRRRVSPEDDDGEECINAATTNGDDGQISGQRGRSSEDEMPRQG) are disordered. The span at 72 to 87 (AATTNGDDGQISGQRG) shows a compositional bias: polar residues. An SBP-type zinc finger spans residues 104-181 (GPCCQVDGCT…AQHNRRRRKV (78 aa)). Cys107, Cys112, Cys129, His132, Cys148, Cys151, His155, and Cys167 together coordinate Zn(2+). The Bipartite nuclear localization signal motif lies at 164-180 (KKSCRSRLAQHNRRRRK).

In terms of tissue distribution, ubiquitous.

The protein resides in the nucleus. In terms of biological role, trans-acting factor that binds specifically to the consensus nucleotide sequence 5'-TNCGTACAA-3'. This chain is Squamosa promoter-binding-like protein 1 (SPL1), found in Oryza sativa subsp. japonica (Rice).